We begin with the raw amino-acid sequence, 194 residues long: Lymphocyte antigen 6 complex locus protein G5b (194 aa).

The first 18 residues, 1–18 (MRACVLVHVLTMVGFALG), serve as a signal peptide directing secretion. Residues 26–118 (RTCHLCFLED…SAQHQSTLPG (93 aa)) enclose the UPAR/Ly6 domain. 5 cysteine pairs are disulfide-bonded: C28–C55, C31–C40, C47–C73, C81–C98, and C99–C104. A glycan (N-linked (GlcNAc...) asparagine) is linked at N182.

In terms of processing, N-glycosylated.

It is found in the secreted. This is Lymphocyte antigen 6 complex locus protein G5b (Ly6g5b) from Rattus norvegicus (Rat).